The chain runs to 414 residues: Enolase (414 aa).

Gln-162 serves as a coordination point for (2R)-2-phosphoglycerate. Glu-204 serves as the catalytic Proton donor. Residues Asp-239, Glu-280, and Asp-307 each contribute to the Mg(2+) site. 4 residues coordinate (2R)-2-phosphoglycerate: Lys-332, Arg-361, Ser-362, and Lys-383. Lys-332 functions as the Proton acceptor in the catalytic mechanism.

This sequence belongs to the enolase family. Mg(2+) is required as a cofactor.

The protein resides in the cytoplasm. Its subcellular location is the secreted. The protein localises to the cell surface. It catalyses the reaction (2R)-2-phosphoglycerate = phosphoenolpyruvate + H2O. It functions in the pathway carbohydrate degradation; glycolysis; pyruvate from D-glyceraldehyde 3-phosphate: step 4/5. Functionally, catalyzes the reversible conversion of 2-phosphoglycerate (2-PG) into phosphoenolpyruvate (PEP). It is essential for the degradation of carbohydrates via glycolysis. This Campylobacter jejuni subsp. doylei (strain ATCC BAA-1458 / RM4099 / 269.97) protein is Enolase.